Here is a 65-residue protein sequence, read N- to C-terminus: Temporin-LK1 (65 aa).

Positions Met-1–Cys-22 are cleaved as a signal peptide. Residues Gln-23 to Gln-44 constitute a propeptide that is removed on maturation. The residue at position 63 (Phe-63) is a Phenylalanine amide.

As to expression, expressed by the skin glands.

The protein resides in the secreted. In terms of biological role, has antimicrobial activity against Gram-positive bacteria S.aureus ATCC 2592 (MIC=2.5 uM), S.aureus ATCC 43300 (MIC=2.5 uM) and B.subtilis (MIC=15.0 uM), against Gram-negative bacteria E.coli ML-35P (MIC=30.0 uM), P.aeruginosa PA01 (MIC=2.5 uM) and P.aeruginosa ATCC 27853 (MIC=2.5 uM) and against fungus C.albicans ATCC 2002 (MIC=5.0 uM). This chain is Temporin-LK1, found in Limnonectes kuhlii (Kuhl's Creek frog).